The following is a 396-amino-acid chain: Probable splicing factor YJU2B (396 aa).

The segment at 1–26 is disordered; it reads MGERKGVNKYYPPDFNPEKHGSLNRY. Serine 40 is subject to Phosphoserine. The stretch at 182–214 forms a coiled coil; sequence LNSMLRRRFREKKKAIQEEEERDQALQAKASLT. The disordered stretch occupies residues 295–396; that stretch reads IVRRRSRDVP…VADYSDSESE (102 aa). At serine 306 the chain carries Phosphoserine. Residues 315–327 show a composition bias toward basic and acidic residues; the sequence is KSGEPRVPEEAAQ. Residues 340–350 are compositionally biased toward polar residues; sequence TTETPKCSSPR. The residue at position 362 (serine 362) is a Phosphoserine.

This sequence belongs to the CWC16 family.

It is found in the nucleus. Functionally, may be involved in mRNA splicing. The chain is Probable splicing factor YJU2B from Homo sapiens (Human).